A 71-amino-acid polypeptide reads, in one-letter code: Exodeoxyribonuclease 7 small subunit (71 aa).

It belongs to the XseB family. Heterooligomer composed of large and small subunits.

Its subcellular location is the cytoplasm. It catalyses the reaction Exonucleolytic cleavage in either 5'- to 3'- or 3'- to 5'-direction to yield nucleoside 5'-phosphates.. In terms of biological role, bidirectionally degrades single-stranded DNA into large acid-insoluble oligonucleotides, which are then degraded further into small acid-soluble oligonucleotides. The protein is Exodeoxyribonuclease 7 small subunit of Clostridium botulinum (strain Loch Maree / Type A3).